Consider the following 298-residue polypeptide: GTPase Era (298 aa).

The Era-type G domain maps to 8-176; the sequence is RSGSVAVIGR…VSDLLKLVPE (169 aa). The G1 stretch occupies residues 16 to 23; that stretch reads GRPNVGKS. Position 16–23 (16–23) interacts with GTP; it reads GRPNVGKS. The tract at residues 42-46 is G2; that stretch reads QTTRH. The tract at residues 63-66 is G3; the sequence is DTPG. GTP contacts are provided by residues 63–67 and 125–128; these read DTPGL and NKVD. Residues 125-128 are G4; it reads NKVD. A G5 region spans residues 155-157; the sequence is VSA. The 85-residue stretch at 199–283 folds into the KH type-2 domain; that stretch reads VREQLMRQLG…FLETWVRVRE (85 aa).

It belongs to the TRAFAC class TrmE-Era-EngA-EngB-Septin-like GTPase superfamily. Era GTPase family. In terms of assembly, monomer.

Its subcellular location is the cytoplasm. The protein localises to the cell inner membrane. An essential GTPase that binds both GDP and GTP, with rapid nucleotide exchange. Plays a role in 16S rRNA processing and 30S ribosomal subunit biogenesis and possibly also in cell cycle regulation and energy metabolism. The polypeptide is GTPase Era (Xanthomonas campestris pv. campestris (strain 8004)).